Reading from the N-terminus, the 1337-residue chain is ABC transporter D family member 1 (1337 aa).

Transmembrane regions (helical) follow at residues 24 to 44 (ILLAAGIVAAGGTAVYLKSRV), 142 to 162 (APLFLRLISENIMLCFMLSTL), 247 to 267 (YASPKYIFWILAYVLGAGTAI), and 342 to 362 (FLLKYLGATVAVILIIEPFFS). The 279-residue stretch at 117–395 (VFRTALSNRL…SVIISLFQAL (279 aa)) folds into the ABC transmembrane type-1 1 domain. Residues 448–695 (VEFSDVKVVT…DAMVVQRAFA (248 aa)) enclose the ABC transporter 1 domain. 481–488 (GPNGSGKS) provides a ligand contact to ATP. Residues 751–1049 (LIPTIFDKQG…VVSQSFMAFG (299 aa)) form the ABC transmembrane type-1 2 domain. The helical transmembrane segment at 900-920 (LLTGQRGVAILYTYMLLGLGF) threads the bilayer. One can recognise an ABC transporter 2 domain in the interval 1091 to 1337 (LDSQDLLSFS…ELRSIEQTTE (247 aa)). Residue 1130–1137 (GPNGSGKT) participates in ATP binding.

This sequence belongs to the ABC transporter superfamily. ABCD family. Peroxisomal fatty acyl CoA transporter (TC 3.A.1.203) subfamily.

Its subcellular location is the peroxisome membrane. The protein localises to the glyoxysome membrane. It carries out the reaction an acyl-CoA(out) + ATP + H2O = an acyl-CoA(in) + ADP + phosphate + H(+). In terms of biological role, contributes to the transport of fatty acids and their derivatives (acyl CoAs) across the peroxisomal membrane. Provides acetate to the glyoxylate cycle in developing seedlings. Involved in pollen tube elongation, ovule fertilization, and seeds germination after imbibition (controls the switch between the opposing developmental programs of dormancy and germination), probably by promoting beta-oxidation of storage lipids during gluconeogenesis. Required for biosynthesis of jasmonic acid and conversion of indole butyric acid to indole acetic acid. Confers sensitivity to monofluoroacetic acid (FAc), a toxic acetate analog, and to 2,4-dichlorophenoxybutyric acid (2,4-DB) and indole-3-butyric acid (IBA), two precursors of auxin after beta-oxidation. In Arabidopsis thaliana (Mouse-ear cress), this protein is ABC transporter D family member 1.